The following is a 285-amino-acid chain: 2,3,4,5-tetrahydropyridine-2,6-dicarboxylate N-succinyltransferase (285 aa).

Belongs to the transferase hexapeptide repeat family.

Its subcellular location is the cytoplasm. The enzyme catalyses (S)-2,3,4,5-tetrahydrodipicolinate + succinyl-CoA + H2O = (S)-2-succinylamino-6-oxoheptanedioate + CoA. It participates in amino-acid biosynthesis; L-lysine biosynthesis via DAP pathway; LL-2,6-diaminopimelate from (S)-tetrahydrodipicolinate (succinylase route): step 1/3. The chain is 2,3,4,5-tetrahydropyridine-2,6-dicarboxylate N-succinyltransferase from Beijerinckia indica subsp. indica (strain ATCC 9039 / DSM 1715 / NCIMB 8712).